Reading from the N-terminus, the 176-residue chain is ATP-dependent protease subunit HslV (176 aa).

The active site involves T2. The Na(+) site is built by G157, C160, and T163.

The protein belongs to the peptidase T1B family. HslV subfamily. As to quaternary structure, a double ring-shaped homohexamer of HslV is capped on each side by a ring-shaped HslU homohexamer. The assembly of the HslU/HslV complex is dependent on binding of ATP.

Its subcellular location is the cytoplasm. The catalysed reaction is ATP-dependent cleavage of peptide bonds with broad specificity.. Its activity is regulated as follows. Allosterically activated by HslU binding. Protease subunit of a proteasome-like degradation complex believed to be a general protein degrading machinery. The chain is ATP-dependent protease subunit HslV from Marinobacter nauticus (strain ATCC 700491 / DSM 11845 / VT8) (Marinobacter aquaeolei).